The following is a 553-amino-acid chain: Methionine--tRNA ligase (553 aa).

The 'HIGH' region signature appears at 12–22 (PYANSQLHLGH). Residues Cys-144, Cys-147, Cys-157, and Cys-160 each coordinate Zn(2+). The 'KMSKS' region signature appears at 332 to 336 (KFSKS). Lys-335 provides a ligand contact to ATP.

It belongs to the class-I aminoacyl-tRNA synthetase family. MetG type 1 subfamily. As to quaternary structure, monomer. The cofactor is Zn(2+).

The protein localises to the cytoplasm. It catalyses the reaction tRNA(Met) + L-methionine + ATP = L-methionyl-tRNA(Met) + AMP + diphosphate. In terms of biological role, is required not only for elongation of protein synthesis but also for the initiation of all mRNA translation through initiator tRNA(fMet) aminoacylation. The chain is Methionine--tRNA ligase from Dehalococcoides mccartyi (strain ATCC BAA-2100 / JCM 16839 / KCTC 5957 / BAV1).